The following is a 98-amino-acid chain: uncharacterized protein (98 aa).

This sequence belongs to the IS150/IS1296 orfA family.

This is an uncharacterized protein from Haemophilus influenzae (strain ATCC 51907 / DSM 11121 / KW20 / Rd).